The following is a 423-amino-acid chain: Serine--tRNA ligase (423 aa).

Residue 230 to 232 (TAE) coordinates L-serine. 261 to 263 (RSE) contributes to the ATP binding site. Glu284 lines the L-serine pocket. 348–351 (EISS) contacts ATP. Residue Ser383 coordinates L-serine.

The protein belongs to the class-II aminoacyl-tRNA synthetase family. Type-1 seryl-tRNA synthetase subfamily. Homodimer. The tRNA molecule binds across the dimer.

The protein resides in the cytoplasm. It carries out the reaction tRNA(Ser) + L-serine + ATP = L-seryl-tRNA(Ser) + AMP + diphosphate + H(+). The catalysed reaction is tRNA(Sec) + L-serine + ATP = L-seryl-tRNA(Sec) + AMP + diphosphate + H(+). It participates in aminoacyl-tRNA biosynthesis; selenocysteinyl-tRNA(Sec) biosynthesis; L-seryl-tRNA(Sec) from L-serine and tRNA(Sec): step 1/1. In terms of biological role, catalyzes the attachment of serine to tRNA(Ser). Is also able to aminoacylate tRNA(Sec) with serine, to form the misacylated tRNA L-seryl-tRNA(Sec), which will be further converted into selenocysteinyl-tRNA(Sec). The protein is Serine--tRNA ligase of Levilactobacillus brevis (strain ATCC 367 / BCRC 12310 / CIP 105137 / JCM 1170 / LMG 11437 / NCIMB 947 / NCTC 947) (Lactobacillus brevis).